The chain runs to 355 residues: CRAL-TRIO domain-containing protein C365.01 (355 aa).

Positions 93–260 constitute a CRAL-TRIO domain; it reads ENGLNQNFVK…SMHGQFDETK (168 aa).

This is CRAL-TRIO domain-containing protein C365.01 from Schizosaccharomyces pombe (strain 972 / ATCC 24843) (Fission yeast).